The primary structure comprises 955 residues: Outer capsid protein VP2 (955 aa).

Belongs to the orbivirus VP2 family.

The protein resides in the virion. The VP2 protein is one of the two proteins (with VP5) which constitute the virus particle outer capsid. It is the major target of the host immunogenic response. Responsible for viral attachment to target host cell, probably by binding to sialic acid. This attachment induces virion internalization predominantly through clathrin-dependent endocytosis. The sequence is that of Outer capsid protein VP2 (Segment-2) from Antilocapra americana (Pronghorn).